A 583-amino-acid polypeptide reads, in one-letter code: Penicillin-binding protein activator LpoA (583 aa).

Residues 1 to 24 form the signal peptide; that stretch reads MATILKQKLKTFFVPTAITLLLSA. Cysteine 25 carries the N-palmitoyl cysteine lipid modification. Cysteine 25 carries S-diacylglycerol cysteine lipidation.

This sequence belongs to the LpoA family. As to quaternary structure, interacts with PBP1a.

The protein resides in the cell outer membrane. In terms of biological role, regulator of peptidoglycan synthesis that is essential for the function of penicillin-binding protein 1A (PBP1a). This is Penicillin-binding protein activator LpoA from Haemophilus ducreyi (strain 35000HP / ATCC 700724).